Consider the following 849-residue polypeptide: Membrane protein-large ribosomal subunit bL9 fusion protein (849 aa).

The unknown stretch occupies residues 1 to 680 (MFSKNKHNTK…TQLEGTNIKT (680 aa)). Helical transmembrane passes span 11–31 (FIVI…LDFQ) and 64–84 (IIFF…VISF). Positions 214–342 (KTLALAMITF…GGDQVVVNIE (129 aa)) constitute a GGDEF domain. The interval 681–849 (VTDTLKHFLK…FLNVTERKSK (169 aa)) is large ribosomal subunit protein bL9.

Belongs to the bacterial ribosomal protein bL9 family.

Its subcellular location is the cell membrane. Functionally, binds to the 23S rRNA. In Onion yellows phytoplasma (strain OY-M), this protein is Membrane protein-large ribosomal subunit bL9 fusion protein.